Here is a 99-residue protein sequence, read N- to C-terminus: Ubiquitin-related modifier 1 homolog (99 aa).

Gly-99 carries the 1-thioglycine modification. A Glycyl lysine isopeptide (Gly-Lys) (interchain with K-? in acceptor proteins) cross-link involves residue Gly-99.

It belongs to the URM1 family. As to quaternary structure, interacts with cer. C-terminal thiocarboxylation occurs in 2 steps, it is first acyl-adenylated (-COAMP) via the hesA/moeB/thiF part of the MOCS3 homolog, then thiocarboxylated (-COSH) via the rhodanese domain of the MOCS3 homolog.

The protein resides in the cytoplasm. Its pathway is tRNA modification; 5-methoxycarbonylmethyl-2-thiouridine-tRNA biosynthesis. Its function is as follows. Acts as a sulfur carrier required for 2-thiolation of mcm(5)S(2)U at tRNA wobble positions of cytosolic tRNA(Lys), tRNA(Glu) and tRNA(Gln). Serves as sulfur donor in tRNA 2-thiolation reaction by being thiocarboxylated (-COSH) at its C-terminus by MOCS3. The sulfur is then transferred to tRNA to form 2-thiolation of mcm(5)S(2)U. Also acts as a ubiquitin-like protein (UBL) that is covalently conjugated via an isopeptide bond to lysine residues of target proteins such as Prx2/Jafrac1, Ciao1, Eip71CD and GILT1. The thiocarboxylated form serves as substrate for conjugation and oxidative stress specifically induces the formation of UBL-protein conjugates. This is Ubiquitin-related modifier 1 homolog from Drosophila persimilis (Fruit fly).